Consider the following 353-residue polypeptide: Dihydroorotate dehydrogenase (quinone) (353 aa).

Residues 66–70 and Thr90 each bind FMN; that span reads AGFDK. Lys70 contributes to the substrate binding site. 115–119 lines the substrate pocket; that stretch reads NRMGF. FMN contacts are provided by Asn143 and Asn176. A substrate-binding site is contributed by Asn176. Ser179 functions as the Nucleophile in the catalytic mechanism. Asn181 lines the substrate pocket. Residues Lys212 and Thr240 each contribute to the FMN site. 241 to 242 is a binding site for substrate; the sequence is NT. FMN contacts are provided by residues Gly264, Gly293, and 314–315; that span reads YT.

It belongs to the dihydroorotate dehydrogenase family. Type 2 subfamily. As to quaternary structure, monomer. FMN is required as a cofactor.

It is found in the cell membrane. The catalysed reaction is (S)-dihydroorotate + a quinone = orotate + a quinol. The protein operates within pyrimidine metabolism; UMP biosynthesis via de novo pathway; orotate from (S)-dihydroorotate (quinone route): step 1/1. Catalyzes the conversion of dihydroorotate to orotate with quinone as electron acceptor. The protein is Dihydroorotate dehydrogenase (quinone) of Mycolicibacterium gilvum (strain PYR-GCK) (Mycobacterium gilvum (strain PYR-GCK)).